A 653-amino-acid polypeptide reads, in one-letter code: tRNA-guanine(15) transglycosylase (653 aa).

Asp-91 serves as the catalytic Nucleophile. Substrate is bound by residues Asp-126 and Ala-193. Residues Cys-276, Cys-278, and Cys-281 each coordinate Zn(2+). The 76-residue stretch at 578-653 (AWRVAVNEES…QAVKTRKGGF (76 aa)) folds into the PUA domain.

This sequence belongs to the archaeosine tRNA-ribosyltransferase family. The cofactor is Zn(2+).

It carries out the reaction guanosine(15) in tRNA + 7-cyano-7-deazaguanine = 7-cyano-7-carbaguanosine(15) in tRNA + guanine. It participates in tRNA modification; archaeosine-tRNA biosynthesis. In terms of biological role, exchanges the guanine residue with 7-cyano-7-deazaguanine (preQ0) at position 15 in the dihydrouridine loop (D-loop) of archaeal tRNAs. This chain is tRNA-guanine(15) transglycosylase, found in Methanothermobacter thermautotrophicus (strain ATCC 29096 / DSM 1053 / JCM 10044 / NBRC 100330 / Delta H) (Methanobacterium thermoautotrophicum).